A 498-amino-acid chain; its full sequence is Lysine--tRNA ligase (498 aa).

Mg(2+) is bound by residues Glu407 and Glu414.

The protein belongs to the class-II aminoacyl-tRNA synthetase family. In terms of assembly, homodimer. It depends on Mg(2+) as a cofactor.

It localises to the cytoplasm. It catalyses the reaction tRNA(Lys) + L-lysine + ATP = L-lysyl-tRNA(Lys) + AMP + diphosphate. The protein is Lysine--tRNA ligase of Rhizobium etli (strain ATCC 51251 / DSM 11541 / JCM 21823 / NBRC 15573 / CFN 42).